A 242-amino-acid chain; its full sequence is Outer membrane protein class 4 (242 aa).

The first 22 residues, 1–22 (MTKQLKLSALFVALLASGTAVA), serve as a signal peptide directing secretion. A run of 7 repeats spans residues 69-70 (AP), 71-72 (EP), 73-74 (EP), 75-76 (EP), 77-78 (EP), 79-80 (AP), and 81-82 (AP). The segment at 69–82 (APEPEPEPEPAPAP) is 7 X 2 AA tandem repeats of X-P. In terms of domain architecture, OmpA-like spans 92–229 (YVDETISLSA…RVDVKIRSIV (138 aa)). Cys-191 and Cys-214 are oxidised to a cystine.

The protein belongs to the outer membrane OOP (TC 1.B.6) superfamily.

It is found in the cell outer membrane. This Neisseria meningitidis serogroup A / serotype 4A (strain DSM 15465 / Z2491) protein is Outer membrane protein class 4 (rmpM).